The chain runs to 264 residues: Thymidylate synthase (264 aa).

R21 contacts dUMP. A (6R)-5,10-methylene-5,6,7,8-tetrahydrofolate-binding site is contributed by H51. Residue 126 to 127 (RR) participates in dUMP binding. C146 acts as the Nucleophile in catalysis. Residues 166–169 (RSCD), N177, and 207–209 (HLY) contribute to the dUMP site. D169 serves as a coordination point for (6R)-5,10-methylene-5,6,7,8-tetrahydrofolate. A263 contributes to the (6R)-5,10-methylene-5,6,7,8-tetrahydrofolate binding site.

It belongs to the thymidylate synthase family. Bacterial-type ThyA subfamily. As to quaternary structure, homodimer.

It is found in the cytoplasm. The catalysed reaction is dUMP + (6R)-5,10-methylene-5,6,7,8-tetrahydrofolate = 7,8-dihydrofolate + dTMP. Its pathway is pyrimidine metabolism; dTTP biosynthesis. Its function is as follows. Catalyzes the reductive methylation of 2'-deoxyuridine-5'-monophosphate (dUMP) to 2'-deoxythymidine-5'-monophosphate (dTMP) while utilizing 5,10-methylenetetrahydrofolate (mTHF) as the methyl donor and reductant in the reaction, yielding dihydrofolate (DHF) as a by-product. This enzymatic reaction provides an intracellular de novo source of dTMP, an essential precursor for DNA biosynthesis. This Shewanella sp. (strain MR-4) protein is Thymidylate synthase.